Here is an 861-residue protein sequence, read N- to C-terminus: Integrator complex subunit 6-like (861 aa).

The region spanning 3-227 (ILLFLIDTSA…QCLESLVQKV (225 aa)) is the VWFA domain. At S617 the chain carries Phosphoserine.

This chain is Integrator complex subunit 6-like (Ints6l), found in Mus musculus (Mouse).